A 365-amino-acid polypeptide reads, in one-letter code: Aminomethyltransferase (365 aa).

Belongs to the GcvT family. The glycine cleavage system is composed of four proteins: P, T, L and H.

The enzyme catalyses N(6)-[(R)-S(8)-aminomethyldihydrolipoyl]-L-lysyl-[protein] + (6S)-5,6,7,8-tetrahydrofolate = N(6)-[(R)-dihydrolipoyl]-L-lysyl-[protein] + (6R)-5,10-methylene-5,6,7,8-tetrahydrofolate + NH4(+). Functionally, the glycine cleavage system catalyzes the degradation of glycine. This chain is Aminomethyltransferase, found in Frankia alni (strain DSM 45986 / CECT 9034 / ACN14a).